We begin with the raw amino-acid sequence, 788 residues long: Glucan 1,3-beta-glucosidase (788 aa).

Residues Met1–Ala42 form the signal peptide. N-linked (GlcNAc...) asparagine glycosylation is found at Asn28, Asn233, Asn381, and Asn773.

Belongs to the glycosyl hydrolase 55 family.

It carries out the reaction Successive hydrolysis of beta-D-glucose units from the non-reducing ends of (1-&gt;3)-beta-D-glucans, releasing alpha-glucose.. This chain is Glucan 1,3-beta-glucosidase (EXG1), found in Cochliobolus carbonum (Maize leaf spot fungus).